The primary structure comprises 375 residues: Heat-inducible transcription repressor HrcA (375 aa).

Residues 307–318 (ATDGATHAAASS) are compositionally biased toward low complexity. Residues 307 to 331 (ATDGATHAAASSQTENQSGDDTRQA) are disordered.

Belongs to the HrcA family.

Functionally, negative regulator of class I heat shock genes (grpE-dnaK-dnaJ and groELS operons). Prevents heat-shock induction of these operons. In Bifidobacterium adolescentis (strain ATCC 15703 / DSM 20083 / NCTC 11814 / E194a), this protein is Heat-inducible transcription repressor HrcA.